The following is a 274-amino-acid chain: 2,3,4,5-tetrahydropyridine-2,6-dicarboxylate N-succinyltransferase (274 aa).

This sequence belongs to the transferase hexapeptide repeat family.

It localises to the cytoplasm. The catalysed reaction is (S)-2,3,4,5-tetrahydrodipicolinate + succinyl-CoA + H2O = (S)-2-succinylamino-6-oxoheptanedioate + CoA. It participates in amino-acid biosynthesis; L-lysine biosynthesis via DAP pathway; LL-2,6-diaminopimelate from (S)-tetrahydrodipicolinate (succinylase route): step 1/3. In Salmonella agona (strain SL483), this protein is 2,3,4,5-tetrahydropyridine-2,6-dicarboxylate N-succinyltransferase.